A 748-amino-acid polypeptide reads, in one-letter code: Catalase-peroxidase (748 aa).

Residues 92 to 238 constitute a cross-link (tryptophyl-tyrosyl-methioninium (Trp-Tyr) (with M-264)); the sequence is WHSAGTYRIG…LAAVQMGLIY (147 aa). Catalysis depends on His-93, which acts as the Proton acceptor. Positions 238–264 form a cross-link, tryptophyl-tyrosyl-methioninium (Tyr-Met) (with W-92); the sequence is YVNPEGPDGNPDPIASARDIRDTFARM. His-279 is a binding site for heme b.

Belongs to the peroxidase family. Peroxidase/catalase subfamily. In terms of assembly, homodimer or homotetramer. Heme b serves as cofactor. Post-translationally, formation of the three residue Trp-Tyr-Met cross-link is important for the catalase, but not the peroxidase activity of the enzyme.

It carries out the reaction H2O2 + AH2 = A + 2 H2O. The catalysed reaction is 2 H2O2 = O2 + 2 H2O. Functionally, bifunctional enzyme with both catalase and broad-spectrum peroxidase activity. This Xanthomonas euvesicatoria pv. vesicatoria (strain 85-10) (Xanthomonas campestris pv. vesicatoria) protein is Catalase-peroxidase.